The primary structure comprises 383 residues: Homoserine O-succinyltransferase (383 aa).

Positions 51 to 360 (NAILLCHALS…EAEHGHDSFL (310 aa)) constitute an AB hydrolase-1 domain. Catalysis depends on serine 157, which acts as the Nucleophile. A substrate-binding site is contributed by arginine 227. Active-site residues include aspartate 323 and histidine 356. Aspartate 357 is a substrate binding site.

The protein belongs to the AB hydrolase superfamily. MetX family. Homodimer.

Its subcellular location is the cytoplasm. It catalyses the reaction L-homoserine + succinyl-CoA = O-succinyl-L-homoserine + CoA. It participates in amino-acid biosynthesis; L-methionine biosynthesis via de novo pathway; O-succinyl-L-homoserine from L-homoserine: step 1/1. Functionally, transfers a succinyl group from succinyl-CoA to L-homoserine, forming succinyl-L-homoserine. The protein is Homoserine O-succinyltransferase of Acidithiobacillus ferrooxidans (strain ATCC 23270 / DSM 14882 / CIP 104768 / NCIMB 8455) (Ferrobacillus ferrooxidans (strain ATCC 23270)).